The primary structure comprises 255 residues: Putative expansin-A27 (255 aa).

An N-terminal signal peptide occupies residues 1 to 24 (MGAMAENLLVLCTILAARMALAAA). Positions 45–160 (GGACGYGNLY…RRVRCWRRGG (116 aa)) constitute an Expansin-like EG45 domain. The 80-residue stretch at 170 to 249 (HFELVLVANV…GWKFGQTFST (80 aa)) folds into the Expansin-like CBD domain.

The protein belongs to the expansin family. Expansin A subfamily.

It localises to the secreted. The protein resides in the cell wall. The protein localises to the membrane. In terms of biological role, may cause loosening and extension of plant cell walls by disrupting non-covalent bonding between cellulose microfibrils and matrix glucans. No enzymatic activity has been found. May be required for rapid internodal elongation in deepwater rice during submergence. This is Putative expansin-A27 (EXPA27) from Oryza sativa subsp. japonica (Rice).